The following is a 455-amino-acid chain: Serine--tRNA ligase (455 aa).

252–254 (TSE) is an L-serine binding site. Residues 283 to 285 (RKE) and valine 299 each bind ATP. Glutamate 306 is a binding site for L-serine. 370–373 (EVVS) provides a ligand contact to ATP. Residue threonine 406 coordinates L-serine.

The protein belongs to the class-II aminoacyl-tRNA synthetase family. Type-1 seryl-tRNA synthetase subfamily. As to quaternary structure, homodimer. The tRNA molecule binds across the dimer.

The protein localises to the cytoplasm. The catalysed reaction is tRNA(Ser) + L-serine + ATP = L-seryl-tRNA(Ser) + AMP + diphosphate + H(+). It catalyses the reaction tRNA(Sec) + L-serine + ATP = L-seryl-tRNA(Sec) + AMP + diphosphate + H(+). It participates in aminoacyl-tRNA biosynthesis; selenocysteinyl-tRNA(Sec) biosynthesis; L-seryl-tRNA(Sec) from L-serine and tRNA(Sec): step 1/1. Functionally, catalyzes the attachment of serine to tRNA(Ser). Is also able to aminoacylate tRNA(Sec) with serine, to form the misacylated tRNA L-seryl-tRNA(Sec), which will be further converted into selenocysteinyl-tRNA(Sec). The chain is Serine--tRNA ligase from Thermococcus sibiricus (strain DSM 12597 / MM 739).